The following is a 353-amino-acid chain: 3'(2'),5'-bisphosphate nucleotidase (353 aa).

The active-site Proton acceptor is aspartate 50. Glutamate 73, aspartate 136, isoleucine 138, and aspartate 139 together coordinate Mg(2+). Threonine 141 acts as the Proton acceptor in catalysis. Adenosine 3',5'-bisphosphate contacts are provided by threonine 141, histidine 232, serine 256, lysine 259, arginine 273, and aspartate 286. The AMP site is built by histidine 232, serine 256, lysine 259, arginine 273, and aspartate 286. Aspartate 286 provides a ligand contact to Mg(2+).

The protein belongs to the inositol monophosphatase superfamily. Requires Mg(2+) as cofactor.

It carries out the reaction 3'-phosphoadenylyl sulfate + H2O = adenosine 5'-phosphosulfate + phosphate. It catalyses the reaction adenosine 3',5'-bisphosphate + H2O = AMP + phosphate. The catalysed reaction is adenosine 2',5'-bisphosphate + H2O = AMP + phosphate. The enzyme catalyses 1D-myo-inositol 1,4-bisphosphate + H2O = 1D-myo-inositol 4-phosphate + phosphate. It carries out the reaction 1D-myo-inositol 1,3,4-trisphosphate + H2O = 1D-myo-inositol 3,4-bisphosphate + phosphate. With respect to regulation, inhibited by Li(+) and Na(+). Functionally, phosphatase that converts adenosine 3'-phosphate 5'-phosphosulfate (PAPS) to adenosine 5'-phosphosulfate (APS) and 3'(2')-phosphoadenosine 5'-phosphate (PAP) to AMP. May regulate the flux of sulfur in the sulfur-activation pathway by converting PAPS to APS. Is also able to hydrolyze inositol 1,4-bisphosphate (Ins(1,4)P2) and inositol 1,3,4-trisphosphate (Ins(1,3,4)P3), but is not active on inositol 1,4,5-trisphosphate, inositol 1-phosphate, fructose 1,6-bisphosphate, AMP and ATP. Its function is as follows. Confers resistance to lithium. The polypeptide is 3'(2'),5'-bisphosphate nucleotidase (tol1) (Schizosaccharomyces pombe (strain 972 / ATCC 24843) (Fission yeast)).